The chain runs to 923 residues: DNA gyrase subunit A (923 aa).

A Topo IIA-type catalytic domain is found at 34–534; the sequence is LPDARDGLKP…SQVDLTIADL (501 aa). The active-site O-(5'-phospho-DNA)-tyrosine intermediate is tyrosine 122. The GyrA-box signature appears at 561–567; that stretch reads QRRGGKG. The disordered stretch occupies residues 881–923; that stretch reads ERVQEPSGGDDEDLPEGEEAAESLGESAESESEPAAEAEGNEE. Composition is skewed to acidic residues over residues 888-901 and 908-923; these read GGDD…EEAA and AESE…GNEE.

It belongs to the type II topoisomerase GyrA/ParC subunit family. As to quaternary structure, heterotetramer, composed of two GyrA and two GyrB chains. In the heterotetramer, GyrA contains the active site tyrosine that forms a transient covalent intermediate with DNA, while GyrB binds cofactors and catalyzes ATP hydrolysis.

It is found in the cytoplasm. The enzyme catalyses ATP-dependent breakage, passage and rejoining of double-stranded DNA.. Its function is as follows. A type II topoisomerase that negatively supercoils closed circular double-stranded (ds) DNA in an ATP-dependent manner to modulate DNA topology and maintain chromosomes in an underwound state. Negative supercoiling favors strand separation, and DNA replication, transcription, recombination and repair, all of which involve strand separation. Also able to catalyze the interconversion of other topological isomers of dsDNA rings, including catenanes and knotted rings. Type II topoisomerases break and join 2 DNA strands simultaneously in an ATP-dependent manner. In Pseudomonas aeruginosa (strain ATCC 15692 / DSM 22644 / CIP 104116 / JCM 14847 / LMG 12228 / 1C / PRS 101 / PAO1), this protein is DNA gyrase subunit A.